A 943-amino-acid chain; its full sequence is Netrin receptor UNC5B-a (943 aa).

Residues 1 to 30 (MYLSRNPSGAALAAILVALILSCNFPSSTA) form the signal peptide. The Extracellular segment spans residues 31–380 (GIEYSDVLPD…LESTGDVALY (350 aa)). Residues 51–148 (PHFLLEPEDA…AGTTKSKRSY (98 aa)) enclose the Ig-like domain. Cystine bridges form between C72–C133, C84–C131, C177–C228, C261–C298, C265–C302, C276–C288, C317–C351, C321–C356, and C329–C341. The region spanning 150-245 (RIAYLRKNFD…KRRSTTATVI (96 aa)) is the Ig-like C2-type domain. Residue N225 is glycosylated (N-linked (GlcNAc...) asparagine). TSP type-1 domains lie at 249–303 (NGGW…TMCP) and 305–357 (DGGW…GLCM). An N-linked (GlcNAc...) asparagine glycan is attached at N350. Residues 381 to 401 (AGLVVAIFIVIILLMAVGIVV) traverse the membrane as a helical segment. The Cytoplasmic segment spans residues 402–943 (YRRNCREFDT…MLVMATDGDC (542 aa)). The ZU5 domain maps to 542-685 (NSVTGTFGSL…LGTYAFVGES (144 aa)). Positions 688–836 (RSAIKRLQLA…LEENVKSFDP (149 aa)) are UPA domain. The 79-residue stretch at 863–941 (KICNSLDAPN…EMMLVMATDG (79 aa)) folds into the Death domain.

Belongs to the unc-5 family. Interacts (via extracellular domain) with flrt3 (via extracellular domain). Interacts with rnd1. Phosphorylated on cytoplasmic tyrosine residues. In the developing visual system, it is expressed within the developing optic vesicles and later become restricted to the dorsal ciliary marginal zone, a site of retinoblast proliferation and differentiation.

Its subcellular location is the cell membrane. Functionally, plays a role in cell-cell adhesion during embryonic development. Receptor for netrin required for axon guidance. Mediates axon repulsion of neuronal growth cones in the developing nervous system upon ligand binding. In Xenopus laevis (African clawed frog), this protein is Netrin receptor UNC5B-a (unc5b-a).